A 258-amino-acid polypeptide reads, in one-letter code: Uroplakin-1a (258 aa).

At 1–14 the chain is on the cytoplasmic side; sequence MASAAAAEAEKGSP. The helical transmembrane segment at 15–35 threads the bilayer; the sequence is VVVGLLVVGNIIILLSGLSLF. The Extracellular portion of the chain corresponds to 36–59; the sequence is AETIWVTADQYRVYPLMGVSGKDD. The chain crosses the membrane as a helical span at residues 60–86; the sequence is VFAGAWIAIFCGFSFFMVASFGVGAAL. The Cytoplasmic portion of the chain corresponds to 87–91; the sequence is CRRRS. Residues 92–112 form a helical membrane-spanning segment; the sequence is MVLTYLVLMLIVYIFECASCI. Topologically, residues 113–230 are extracellular; sequence TSYTHRDYMV…HIGHAIDSYT (118 aa). N-linked (GlcNAc...) asparagine glycosylation occurs at asparagine 170. A helical membrane pass occupies residues 231-252; sequence WGISWFGFAILMWTLPVMLIAM. Over 253–258 the chain is Cytoplasmic; the sequence is YFYTML.

This sequence belongs to the tetraspanin (TM4SF) family. In terms of assembly, homodimer; disulfide-linked. Interacts with uroplakin-2 (UPK2). High expression restricted to ureteric urothelium (most superficial cells); low expression in prostate. Expression in normal urothelial cells is lost in culture. Some expression in tumor cell lines derived from urothelial malignancies.

Its subcellular location is the membrane. In terms of biological role, component of the asymmetric unit membrane (AUM); a highly specialized biomembrane elaborated by terminally differentiated urothelial cells. May play an important role in normal bladder epithelial physiology, possibly in regulating membrane permeability of superficial umbrella cells or in stabilizing the apical membrane through AUM/cytoskeletal interactions. The chain is Uroplakin-1a (UPK1A) from Homo sapiens (Human).